The primary structure comprises 203 residues: Cbp/p300-interacting transactivator 1 (203 aa).

Disordered stretches follow at residues 1–24 (MPTM…DANQ) and 51–86 (TANG…PSFN). Low complexity predominate over residues 61 to 84 (PTSSSGSTSPIGSPTATPSSKPPS). Residues 168 to 177 (LMSLVVELGL) carry the Nuclear export signal motif.

Belongs to the CITED family. Homodimer. Binds to RBM14. Interacts (via N-terminus) with HSPA8; the interaction suppresses the association of CITED1 with p300/CBP and SMAD-mediated transcription transactivation. Interacts (via C-terminus) with TOX3 (via HGM box); the interaction increases estrogen-response element (ERE)-dependent transcription and protection against cell death. Interacts with ESR1; the interaction occurs in a estrogen-dependent manner. Interacts (unphosphorylated form preferentially and via C-terminus) with EP300. Interacts (via C-terminus) with CREBBP. Interacts with EGR2. In terms of processing, phosphorylated. Phosphorylation changes in a cell cycle-dependent manner and reduces its transcriptional cofactor activity. Expressed in calvarial osteoblasts. Expressed in nulliparous mammary epithelial cells; absent in pregnant mice and in lacting mammary glands. Also expressed in mammary tumors (at protein level). Expressed only in melanocytes and testis. Expressed at high levels in the strongly pigmented melanoma cells but at low levels in the weakly pigmented cells.

Its subcellular location is the nucleus. The protein resides in the cytoplasm. In terms of biological role, transcriptional coactivator of the p300/CBP-mediated transcription complex. Enhances SMAD-mediated transcription by strengthening the functional link between the DNA-binding SMAD transcription factors and the p300/CBP transcription coactivator complex. Stimulates estrogen-dependent transactivation activity mediated by estrogen receptors signaling; stabilizes the interaction of estrogen receptor ESR1 and histone acetyltransferase EP300. Positively regulates TGF-beta signaling through its association with the SMAD/p300/CBP-mediated transcriptional coactivator complex. Induces transcription from estrogen-responsive promoters and protection against cell death. Potentiates EGR2-mediated transcriptional activation activity from the ERBB2 promoter. Acts as an inhibitor of osteoblastic mineralization through a cAMP-dependent parathyroid hormone receptor signaling. May play a role in pigmentation of melanocytes. Associates with chromatin to the estrogen-responsive TGF-alpha promoter region in a estrogen-dependent manner. The chain is Cbp/p300-interacting transactivator 1 (Cited1) from Mus musculus (Mouse).